We begin with the raw amino-acid sequence, 389 residues long: Putative zinc finger CCCH domain-containing protein 10 (389 aa).

A compositionally biased stretch (polar residues) spans Met1–Gln11. Residues Met1–Met110 are disordered. 2 stretches are compositionally biased toward basic and acidic residues: residues Glu12 to Glu52 and Arg86 to Met110. C3H1-type zinc fingers lie at residues Arg131–Pro157 and Pro158–Glu190. A disordered region spans residues Cys183–Lys296. Composition is skewed to basic and acidic residues over residues Pro204–Ala243 and Arg251–Arg284.

The sequence is that of Putative zinc finger CCCH domain-containing protein 10 from Arabidopsis thaliana (Mouse-ear cress).